The primary structure comprises 660 residues: Bifunctional polymyxin resistance protein ArnA (660 aa).

Positions methionine 1–leucine 304 are formyltransferase ArnAFT. Catalysis depends on histidine 104, which acts as the Proton donor; for formyltransferase activity. (6R)-10-formyltetrahydrofolate is bound by residues arginine 114 and valine 136–aspartate 140. Residues arginine 314–serine 660 are dehydrogenase ArnADH. Residues aspartate 347 and aspartate 368–isoleucine 369 contribute to the NAD(+) site. UDP-alpha-D-glucuronate is bound by residues alanine 393, tyrosine 398, and threonine 432 to serine 433. Residue glutamate 434 is the Proton acceptor; for decarboxylase activity of the active site. UDP-alpha-D-glucuronate contacts are provided by residues arginine 460, asparagine 492, lysine 526–arginine 535, and tyrosine 613. The Proton donor; for decarboxylase activity role is filled by arginine 619.

This sequence in the N-terminal section; belongs to the Fmt family. UDP-L-Ara4N formyltransferase subfamily. In the C-terminal section; belongs to the NAD(P)-dependent epimerase/dehydratase family. UDP-glucuronic acid decarboxylase subfamily. Homohexamer, formed by a dimer of trimers.

The enzyme catalyses UDP-alpha-D-glucuronate + NAD(+) = UDP-beta-L-threo-pentopyranos-4-ulose + CO2 + NADH. It carries out the reaction UDP-4-amino-4-deoxy-beta-L-arabinose + (6R)-10-formyltetrahydrofolate = UDP-4-deoxy-4-formamido-beta-L-arabinose + (6S)-5,6,7,8-tetrahydrofolate + H(+). The protein operates within nucleotide-sugar biosynthesis; UDP-4-deoxy-4-formamido-beta-L-arabinose biosynthesis; UDP-4-deoxy-4-formamido-beta-L-arabinose from UDP-alpha-D-glucuronate: step 1/3. It functions in the pathway nucleotide-sugar biosynthesis; UDP-4-deoxy-4-formamido-beta-L-arabinose biosynthesis; UDP-4-deoxy-4-formamido-beta-L-arabinose from UDP-alpha-D-glucuronate: step 3/3. Its pathway is bacterial outer membrane biogenesis; lipopolysaccharide biosynthesis. Its function is as follows. Bifunctional enzyme that catalyzes the oxidative decarboxylation of UDP-glucuronic acid (UDP-GlcUA) to UDP-4-keto-arabinose (UDP-Ara4O) and the addition of a formyl group to UDP-4-amino-4-deoxy-L-arabinose (UDP-L-Ara4N) to form UDP-L-4-formamido-arabinose (UDP-L-Ara4FN). The modified arabinose is attached to lipid A and is required for resistance to polymyxin and cationic antimicrobial peptides. The chain is Bifunctional polymyxin resistance protein ArnA from Escherichia fergusonii (strain ATCC 35469 / DSM 13698 / CCUG 18766 / IAM 14443 / JCM 21226 / LMG 7866 / NBRC 102419 / NCTC 12128 / CDC 0568-73).